The chain runs to 345 residues: Ubiquinone biosynthesis O-methyltransferase, mitochondrial (345 aa).

Residues 1 to 86 (MWRGGRLSSR…TYRSSWKKLY (86 aa)) constitute a mitochondrion transit peptide. Position 124 (arginine 124) interacts with S-adenosyl-L-methionine. 2 positions are modified to N6-acetyllysine: lysine 143 and lysine 149. Positions 154 and 175 each coordinate S-adenosyl-L-methionine. Lysine 196 is subject to N6-acetyllysine. S-adenosyl-L-methionine is bound at residue serine 222. Mg(2+) is bound by residues glutamate 223, glutamate 226, and histidine 227.

This sequence belongs to the class I-like SAM-binding methyltransferase superfamily. UbiG/COQ3 family. In terms of assembly, component of a multi-subunit COQ enzyme complex, composed of at least COQ3, COQ4, COQ5, COQ6, COQ7 and COQ9. It depends on Mg(2+) as a cofactor.

It localises to the mitochondrion inner membrane. The enzyme catalyses 3,4-dihydroxy-5-(all-trans-decaprenyl)benzoate + S-adenosyl-L-methionine = 4-hydroxy-3-methoxy-5-(all-trans-decaprenyl)benzoate + S-adenosyl-L-homocysteine + H(+). It carries out the reaction a 3-demethylubiquinone + S-adenosyl-L-methionine = a ubiquinone + S-adenosyl-L-homocysteine. The catalysed reaction is 3-demethylubiquinol-10 + S-adenosyl-L-methionine = ubiquinol-10 + S-adenosyl-L-homocysteine + H(+). Its pathway is cofactor biosynthesis; ubiquinone biosynthesis. Functionally, O-methyltransferase required for two non-consecutive steps during ubiquinone biosynthesis. Catalyzes the 2 O-methylation of 3,4-dihydroxy-5-(all-trans-decaprenyl)benzoic acid into 4-hydroxy-3-methoxy-5-(all-trans-decaprenyl)benzoic acid. Also catalyzes the last step of ubiquinone biosynthesis by mediating methylation of 3-demethylubiquinone into ubiquinone. Also able to mediate the methylation of 3-demethylubiquinol-10 into ubiquinol-10. The chain is Ubiquinone biosynthesis O-methyltransferase, mitochondrial from Rattus norvegicus (Rat).